Consider the following 200-residue polypeptide: Serine/threonine-protein kinase mos (200 aa).

The region spanning 2–200 (LCLLQPLGSG…ELLKGERVTA (199 aa)) is the Protein kinase domain. ATP contacts are provided by residues 8 to 16 (LGSGGFGSV) and Lys29. Catalysis depends on Asp143, which acts as the Proton acceptor.

Belongs to the protein kinase superfamily. Ser/Thr protein kinase family.

It catalyses the reaction L-seryl-[protein] + ATP = O-phospho-L-seryl-[protein] + ADP + H(+). The catalysed reaction is L-threonyl-[protein] + ATP = O-phospho-L-threonyl-[protein] + ADP + H(+). This Nycticorax nycticorax (Black-crowned night-heron) protein is Serine/threonine-protein kinase mos (MOS).